The chain runs to 1341 residues: DNA-directed RNA polymerase subunit beta (1341 aa).

Belongs to the RNA polymerase beta chain family. As to quaternary structure, the RNAP catalytic core consists of 2 alpha, 1 beta, 1 beta' and 1 omega subunit. When a sigma factor is associated with the core the holoenzyme is formed, which can initiate transcription.

It carries out the reaction RNA(n) + a ribonucleoside 5'-triphosphate = RNA(n+1) + diphosphate. In terms of biological role, DNA-dependent RNA polymerase catalyzes the transcription of DNA into RNA using the four ribonucleoside triphosphates as substrates. The protein is DNA-directed RNA polymerase subunit beta of Blochmanniella pennsylvanica (strain BPEN).